The following is a 212-amino-acid chain: Uracil phosphoribosyltransferase (212 aa).

5-phospho-alpha-D-ribose 1-diphosphate is bound by residues Arg78, Arg103, and Asp130–Ser138. Uracil contacts are provided by residues Ile193 and Gly198–Ala200. Residue Asp199 participates in 5-phospho-alpha-D-ribose 1-diphosphate binding.

The protein belongs to the UPRTase family. Mg(2+) is required as a cofactor.

It catalyses the reaction UMP + diphosphate = 5-phospho-alpha-D-ribose 1-diphosphate + uracil. The protein operates within pyrimidine metabolism; UMP biosynthesis via salvage pathway; UMP from uracil: step 1/1. Its activity is regulated as follows. Allosterically activated by GTP. Functionally, catalyzes the conversion of uracil and 5-phospho-alpha-D-ribose 1-diphosphate (PRPP) to UMP and diphosphate. The chain is Uracil phosphoribosyltransferase from Bordetella petrii (strain ATCC BAA-461 / DSM 12804 / CCUG 43448).